The following is a 236-amino-acid chain: Purine nucleoside phosphorylase DeoD-type (236 aa).

His-5 provides a ligand contact to a purine D-ribonucleoside. Residues Gly-21, Arg-25, Arg-44, and 88-91 (RVGT) contribute to the phosphate site. Residues 180–182 (DME) and 204–205 (SD) each bind a purine D-ribonucleoside. Residue Asp-205 is the Proton donor of the active site.

It belongs to the PNP/UDP phosphorylase family. As to quaternary structure, homohexamer; trimer of homodimers.

The enzyme catalyses a purine D-ribonucleoside + phosphate = a purine nucleobase + alpha-D-ribose 1-phosphate. It carries out the reaction a purine 2'-deoxy-D-ribonucleoside + phosphate = a purine nucleobase + 2-deoxy-alpha-D-ribose 1-phosphate. Functionally, catalyzes the reversible phosphorolytic breakdown of the N-glycosidic bond in the beta-(deoxy)ribonucleoside molecules, with the formation of the corresponding free purine bases and pentose-1-phosphate. This Buchnera aphidicola subsp. Schizaphis graminum (strain Sg) protein is Purine nucleoside phosphorylase DeoD-type.